A 480-amino-acid polypeptide reads, in one-letter code: Glutamate--tRNA ligase (480 aa).

The short motif at 9-19 (PSPTGDPHVGT) is the 'HIGH' region element. The 'KMSKS' region motif lies at 253-257 (KISKR). Lys256 contacts ATP.

The protein belongs to the class-I aminoacyl-tRNA synthetase family. Glutamate--tRNA ligase type 1 subfamily. In terms of assembly, monomer.

The protein localises to the cytoplasm. The enzyme catalyses tRNA(Glu) + L-glutamate + ATP = L-glutamyl-tRNA(Glu) + AMP + diphosphate. Functionally, catalyzes the attachment of glutamate to tRNA(Glu) in a two-step reaction: glutamate is first activated by ATP to form Glu-AMP and then transferred to the acceptor end of tRNA(Glu). The chain is Glutamate--tRNA ligase from Deinococcus geothermalis (strain DSM 11300 / CIP 105573 / AG-3a).